The primary structure comprises 439 residues: 3-phosphoshikimate 1-carboxyvinyltransferase (439 aa).

Residues lysine 21, serine 22, and arginine 26 each contribute to the 3-phosphoshikimate site. Position 21 (lysine 21) interacts with phosphoenolpyruvate. Glycine 94 and arginine 122 together coordinate phosphoenolpyruvate. Positions 167, 169, 320, and 347 each coordinate 3-phosphoshikimate. Glutamine 169 serves as a coordination point for phosphoenolpyruvate. Catalysis depends on aspartate 320, which acts as the Proton acceptor. Phosphoenolpyruvate contacts are provided by arginine 351 and arginine 395.

It belongs to the EPSP synthase family. In terms of assembly, monomer.

Its subcellular location is the cytoplasm. It carries out the reaction 3-phosphoshikimate + phosphoenolpyruvate = 5-O-(1-carboxyvinyl)-3-phosphoshikimate + phosphate. Its pathway is metabolic intermediate biosynthesis; chorismate biosynthesis; chorismate from D-erythrose 4-phosphate and phosphoenolpyruvate: step 6/7. Functionally, catalyzes the transfer of the enolpyruvyl moiety of phosphoenolpyruvate (PEP) to the 5-hydroxyl of shikimate-3-phosphate (S3P) to produce enolpyruvyl shikimate-3-phosphate and inorganic phosphate. The chain is 3-phosphoshikimate 1-carboxyvinyltransferase from Hyphomonas neptunium (strain ATCC 15444).